The chain runs to 299 residues: Acetylglutamate kinase (299 aa).

Residues 72–73 (GG), arginine 94, and asparagine 196 each bind substrate.

The protein belongs to the acetylglutamate kinase family. ArgB subfamily.

Its subcellular location is the cytoplasm. It carries out the reaction N-acetyl-L-glutamate + ATP = N-acetyl-L-glutamyl 5-phosphate + ADP. It functions in the pathway amino-acid biosynthesis; L-arginine biosynthesis; N(2)-acetyl-L-ornithine from L-glutamate: step 2/4. Its function is as follows. Catalyzes the ATP-dependent phosphorylation of N-acetyl-L-glutamate. This Burkholderia mallei (strain NCTC 10247) protein is Acetylglutamate kinase.